The sequence spans 174 residues: Protein-lysine myristoyltransferase HlyC (174 aa).

Residues H23 and D92 contribute to the active site. H151 contacts heme.

This sequence belongs to the RTX toxin acyltransferase family. As to quaternary structure, monomer. In terms of processing, proteolytically cleaved by the protease systems ClpAP, ClpXP and FtsH, leading to its degradation.

Its subcellular location is the cytoplasm. The enzyme catalyses tetradecanoyl-[ACP] + L-lysyl-[protein] = N(6)-tetradecanoyl-L-lysyl-[protein] + holo-[ACP] + H(+). Its activity is regulated as follows. The acyltransferase activity is inhibited by heme. In terms of biological role, protein-lysine myristoyltransferase that catalyzes myristoylation of the protoxin (HlyA) at two internal lysine residues, thereby converting it to the active toxin. This chain is Protein-lysine myristoyltransferase HlyC, found in Escherichia coli.